The primary structure comprises 941 residues: Bifunctional glutamine synthetase adenylyltransferase/adenylyl-removing enzyme (941 aa).

The segment at 1 to 437 (MPMPTVSMSP…AAEFAELLAP (437 aa)) is adenylyl removase. The tract at residues 444–941 (PDALADYWRA…FPLGKDETAL (498 aa)) is adenylyl transferase.

Belongs to the GlnE family. Mg(2+) serves as cofactor.

The enzyme catalyses [glutamine synthetase]-O(4)-(5'-adenylyl)-L-tyrosine + phosphate = [glutamine synthetase]-L-tyrosine + ADP. It catalyses the reaction [glutamine synthetase]-L-tyrosine + ATP = [glutamine synthetase]-O(4)-(5'-adenylyl)-L-tyrosine + diphosphate. In terms of biological role, involved in the regulation of glutamine synthetase GlnA, a key enzyme in the process to assimilate ammonia. When cellular nitrogen levels are high, the C-terminal adenylyl transferase (AT) inactivates GlnA by covalent transfer of an adenylyl group from ATP to specific tyrosine residue of GlnA, thus reducing its activity. Conversely, when nitrogen levels are low, the N-terminal adenylyl removase (AR) activates GlnA by removing the adenylyl group by phosphorolysis, increasing its activity. The regulatory region of GlnE binds the signal transduction protein PII (GlnB) which indicates the nitrogen status of the cell. In Xanthomonas axonopodis pv. citri (strain 306), this protein is Bifunctional glutamine synthetase adenylyltransferase/adenylyl-removing enzyme.